Consider the following 284-residue polypeptide: RNA polymerase sigma factor RpoH (284 aa).

The tract at residues 53–122 (LILSHLRFVV…IHEYVLRNWR (70 aa)) is sigma-70 factor domain-2. Positions 77–80 (DLIQ) match the Interaction with polymerase core subunit RpoC motif. The interval 228-280 (AMQGLDERSQDIIRARWLDEDNKSTLQELADRYGVSAERVRQLEKNAMKKLRA) is sigma-70 factor domain-4. A DNA-binding region (H-T-H motif) is located at residues 253-272 (LQELADRYGVSAERVRQLEK).

The protein belongs to the sigma-70 factor family. RpoH subfamily. Interacts with the RNA polymerase core enzyme.

It localises to the cytoplasm. Functionally, sigma factors are initiation factors that promote the attachment of RNA polymerase to specific initiation sites and are then released. This sigma factor is involved in regulation of expression of heat shock genes. The protein is RNA polymerase sigma factor RpoH of Escherichia coli O6:H1 (strain CFT073 / ATCC 700928 / UPEC).